Consider the following 261-residue polypeptide: Small ribosomal subunit protein eS4B (261 aa).

S32 is subject to Phosphoserine. One can recognise an S4 RNA-binding domain in the interval 42–105; it reads LPLIVFLRNR…NENFRLVYDV (64 aa). K62 participates in a covalent cross-link: Glycyl lysine isopeptide (Lys-Gly) (interchain with G-Cter in ubiquitin). T115 bears the Phosphothreonine mark. Glycyl lysine isopeptide (Lys-Gly) (interchain with G-Cter in ubiquitin) cross-links involve residues K134, K161, K168, K174, K179, K211, and K233. S247 is subject to Phosphoserine.

The protein belongs to the eukaryotic ribosomal protein eS4 family. In terms of assembly, component of the small ribosomal subunit (SSU). Mature yeast ribosomes consist of a small (40S) and a large (60S) subunit. The 40S small subunit contains 1 molecule of ribosomal RNA (18S rRNA) and 33 different proteins (encoded by 57 genes). The large 60S subunit contains 3 rRNA molecules (25S, 5.8S and 5S rRNA) and 46 different proteins (encoded by 81 genes).

Its subcellular location is the cytoplasm. Its function is as follows. Component of the ribosome, a large ribonucleoprotein complex responsible for the synthesis of proteins in the cell. The small ribosomal subunit (SSU) binds messenger RNAs (mRNAs) and translates the encoded message by selecting cognate aminoacyl-transfer RNA (tRNA) molecules. The large subunit (LSU) contains the ribosomal catalytic site termed the peptidyl transferase center (PTC), which catalyzes the formation of peptide bonds, thereby polymerizing the amino acids delivered by tRNAs into a polypeptide chain. The nascent polypeptides leave the ribosome through a tunnel in the LSU and interact with protein factors that function in enzymatic processing, targeting, and the membrane insertion of nascent chains at the exit of the ribosomal tunnel. This Saccharomyces cerevisiae (strain ATCC 204508 / S288c) (Baker's yeast) protein is Small ribosomal subunit protein eS4B.